Consider the following 195-residue polypeptide: Imidazoleglycerol-phosphate dehydratase (195 aa).

It belongs to the imidazoleglycerol-phosphate dehydratase family.

The protein localises to the cytoplasm. It catalyses the reaction D-erythro-1-(imidazol-4-yl)glycerol 3-phosphate = 3-(imidazol-4-yl)-2-oxopropyl phosphate + H2O. The protein operates within amino-acid biosynthesis; L-histidine biosynthesis; L-histidine from 5-phospho-alpha-D-ribose 1-diphosphate: step 6/9. The chain is Imidazoleglycerol-phosphate dehydratase from Haloarcula marismortui (strain ATCC 43049 / DSM 3752 / JCM 8966 / VKM B-1809) (Halobacterium marismortui).